The chain runs to 86 residues: Small ribosomal subunit protein uS17 (86 aa).

This sequence belongs to the universal ribosomal protein uS17 family. As to quaternary structure, part of the 30S ribosomal subunit.

One of the primary rRNA binding proteins, it binds specifically to the 5'-end of 16S ribosomal RNA. In Caldicellulosiruptor saccharolyticus (strain ATCC 43494 / DSM 8903 / Tp8T 6331), this protein is Small ribosomal subunit protein uS17.